The following is a 364-amino-acid chain: Tyrosine--tRNA ligase (364 aa).

The L-tyrosine site is built by Tyr41, Tyr167, Gln171, Asp174, and Gln189. Positions Lys238–Ser242 match the 'KMSKS' region motif. Lys241 contacts ATP.

Belongs to the class-I aminoacyl-tRNA synthetase family. TyrS type 4 subfamily. Homodimer.

The protein localises to the cytoplasm. The enzyme catalyses tRNA(Tyr) + L-tyrosine + ATP = L-tyrosyl-tRNA(Tyr) + AMP + diphosphate + H(+). Its function is as follows. Catalyzes the attachment of tyrosine to tRNA(Tyr) in a two-step reaction: tyrosine is first activated by ATP to form Tyr-AMP and then transferred to the acceptor end of tRNA(Tyr). This chain is Tyrosine--tRNA ligase, found in Sulfurisphaera tokodaii (strain DSM 16993 / JCM 10545 / NBRC 100140 / 7) (Sulfolobus tokodaii).